The sequence spans 589 residues: MTISSAHPETEPKWWKEATIYQIYPASFKDSNNDGWGDMKGIASKLEYIKELGADAIWISPFYDSPQDDMGYDIANYEKVWPTYGTNEDCFALIEKTHKLGMKFITDLVINHCSSEHEWFKESRSSKTNPKRDWFFWRPPKGYDAEGKPIPPNNWRSYFGGSAWTFDEKTQEFYLRLFCSTQPDLNWENEDCRKAIYESAVGYWLDHGVDGFRIDVGSLYSKVAGLPDAPVIDENSKWQPSDPFTMNGPRIHEFHQEMNKFIRNRVKDGREIMTVGEMQHATDETKRLYTSASRHELSELFNFSHTDVGTSPKFRQNLIPYELKDWKVALAELFRYVNGTDCWSTIYLENHDQPRSITRFGDDSPKNRVISGKLLSVLLVSLSGTLYVYQGQELGEINFKNWPIEKYEDVEVRNNYDAIKEEHGENSKEMKRFLEAIALISRDHARTPMQWSREEPNAGFSGPNAKPWFYLNESFREGINAEDESKDPNSVLNFWKEALRFRKAHKDITVYGYDFEFIDLDNKKLFSFTKKYDNKTLFAALNFSSDSIDFTIPNNSSSFKLEFGNYPRSEVDASSRTLKPWEGRIYISE.

Aspartate 215 serves as the catalytic Nucleophile. Glutamate 277 (proton donor) is an active-site residue.

The protein belongs to the glycosyl hydrolase 13 family.

The enzyme catalyses Hydrolysis of (1-&gt;6)-alpha-D-glucosidic linkages in some oligosaccharides produced from starch and glycogen by alpha-amylase, and in isomaltose.. Alpha-glucosidase with specificity for isomaltase, methyl-alpha-glucoside, and palatinose. The protein is Oligo-1,6-glucosidase IMA2 (IMA2) of Saccharomyces cerevisiae (strain ATCC 204508 / S288c) (Baker's yeast).